The sequence spans 471 residues: A-type ATP synthase subunit B (471 aa).

Belongs to the ATPase alpha/beta chains family. Has multiple subunits with at least A(3), B(3), C, D, E, F, H, I and proteolipid K(x).

The protein resides in the cell membrane. Component of the A-type ATP synthase that produces ATP from ADP in the presence of a proton gradient across the membrane. The B chain is a regulatory subunit. The polypeptide is A-type ATP synthase subunit B (Halobacterium salinarum (strain ATCC 29341 / DSM 671 / R1)).